Here is a 140-residue protein sequence, read N- to C-terminus: Putative pre-16S rRNA nuclease (140 aa).

It belongs to the YqgF nuclease family.

The protein localises to the cytoplasm. Could be a nuclease involved in processing of the 5'-end of pre-16S rRNA. The polypeptide is Putative pre-16S rRNA nuclease (Pasteurella multocida (strain Pm70)).